We begin with the raw amino-acid sequence, 313 residues long: tRNA-cytidine(32) 2-sulfurtransferase (313 aa).

Positions 47 to 52 (SGGKDS) match the PP-loop motif motif. [4Fe-4S] cluster is bound by residues Cys-122, Cys-125, and Cys-213.

This sequence belongs to the TtcA family. Homodimer. Requires Mg(2+) as cofactor. [4Fe-4S] cluster is required as a cofactor.

It localises to the cytoplasm. It catalyses the reaction cytidine(32) in tRNA + S-sulfanyl-L-cysteinyl-[cysteine desulfurase] + AH2 + ATP = 2-thiocytidine(32) in tRNA + L-cysteinyl-[cysteine desulfurase] + A + AMP + diphosphate + H(+). It participates in tRNA modification. Functionally, catalyzes the ATP-dependent 2-thiolation of cytidine in position 32 of tRNA, to form 2-thiocytidine (s(2)C32). The sulfur atoms are provided by the cysteine/cysteine desulfurase (IscS) system. This chain is tRNA-cytidine(32) 2-sulfurtransferase, found in Yersinia pseudotuberculosis serotype IB (strain PB1/+).